A 450-amino-acid chain; its full sequence is Caspase Dronc (450 aa).

Residues 1 to 134 (MQPPELEIGM…RTSRKSADIV (134 aa)) constitute a propeptide that is removed on maturation. The CARD domain occupies 64–109 (EKDVRVEQHRRLLLKITQRGPTAYNLLINALRNINCLDAAVLLESV). A required for binding Diap1 region spans residues 114–125 (SRPPFISLNERR). Catalysis depends on residues H271 and C318. The propeptide occupies 321-324 (DEYD).

It belongs to the peptidase C14A family. As to quaternary structure, interacts (via residues 114-125) with Diap1 (via BIR 2 domain); binding blocks Dronc-mediated cell death. Can form a stable complex with Drice. Rpr, hid and grim can out-compete Dronc for binding Diap1, therefore removing Diap1-mediated ubiquitination. Interacts (via CARD domain) with Dark (via Dark CARD and WD domains); the interaction stimulates Dark oligomerization to form the apoptosome and brings pairs of Dronc molecules together on the apoptosome to facilitate their dimerization and activation by autocatalytic cleavage. Binding to Dark stimulates apoptosome assembly. After autocatalytic cleavage the Dronc caspase domain dissociates from the apoptosome but the CARD domain remains associated. Post-translationally, ubiquitinated by Diap1, leading to its subsequent degradation. As to expression, ubiquitously expressed in embryos during early stages of development. In late third instar larvae, dramatic up-regulation in salivary glands and midgut before histolysis of these tissues.

The protein localises to the cytoplasm. The enzyme catalyses Strict requirement for an Asp residue at position P1 and with a marked preference for His at position P2. It has a preferred cleavage sequence of Leu-Gly-His-Asp-|-Xaa.. Its activity is regulated as follows. Zymogen activated by autocatalytic cleavage; association with the Dark apoptosome brings multiple molecules together to facilitate their dimerization and activation by autocatalytic cleavage. Its function is as follows. Involved in the activation cascade of caspases responsible for apoptosis execution. Effector of steroid-mediated apoptosis during insect metamorphosis. Overexpression promotes programmed cell death. Interaction with Diap1 is required to suppress Dronc-mediated cell death; via Diap1-mediated ubiquitination of Dronc. Rate-limiting caspase in rpr, grim and hid death pathway. Recruited to the Dark apoptosome, an adapter protein complex that mediates activation of the caspase cascade in programmed cell death initiated by the intrinsic apoptosis pathway. Association with the Dark apoptosome stimulates autocatalytic cleavage and activation of Dronc, promoting Dronc-mediated cleavage of downstream effector caspases such as Drice. This Drosophila melanogaster (Fruit fly) protein is Caspase Dronc.